Reading from the N-terminus, the 400-residue chain is Acetate kinase (400 aa).

Asn10 provides a ligand contact to Mg(2+). Lys17 contributes to the ATP binding site. Arg91 contacts substrate. The active-site Proton donor/acceptor is the Asp150. ATP contacts are provided by residues 210-214 (HLGNG), 285-287 (DCR), and 333-337 (GIGEN). Glu387 serves as a coordination point for Mg(2+).

It belongs to the acetokinase family. In terms of assembly, homodimer. Mg(2+) serves as cofactor. It depends on Mn(2+) as a cofactor.

Its subcellular location is the cytoplasm. The catalysed reaction is acetate + ATP = acetyl phosphate + ADP. It functions in the pathway metabolic intermediate biosynthesis; acetyl-CoA biosynthesis; acetyl-CoA from acetate: step 1/2. In terms of biological role, catalyzes the formation of acetyl phosphate from acetate and ATP. Can also catalyze the reverse reaction. In Yersinia pseudotuberculosis serotype I (strain IP32953), this protein is Acetate kinase.